The following is a 473-amino-acid chain: ATP synthase subunit beta (473 aa).

Position 158 to 165 (158 to 165 (GGAGVGKT)) interacts with ATP.

Belongs to the ATPase alpha/beta chains family. In terms of assembly, F-type ATPases have 2 components, CF(1) - the catalytic core - and CF(0) - the membrane proton channel. CF(1) has five subunits: alpha(3), beta(3), gamma(1), delta(1), epsilon(1). CF(0) has three main subunits: a(1), b(2) and c(9-12). The alpha and beta chains form an alternating ring which encloses part of the gamma chain. CF(1) is attached to CF(0) by a central stalk formed by the gamma and epsilon chains, while a peripheral stalk is formed by the delta and b chains.

The protein localises to the cell membrane. It catalyses the reaction ATP + H2O + 4 H(+)(in) = ADP + phosphate + 5 H(+)(out). Its function is as follows. Produces ATP from ADP in the presence of a proton gradient across the membrane. The catalytic sites are hosted primarily by the beta subunits. This Priestia megaterium (strain ATCC 12872 / QMB1551) (Bacillus megaterium) protein is ATP synthase subunit beta.